Consider the following 305-residue polypeptide: tRNA-cytidine(32) 2-sulfurtransferase (305 aa).

A disordered region spans residues 1-20 (MTAVLPLPHPLADPAPRDPR). The PP-loop motif motif lies at 59–64 (SGGKDS). [4Fe-4S] cluster is bound by residues Cys134, Cys137, and Cys225. Low complexity predominate over residues 282 to 293 (DAPPDLAPDPGA). The tract at residues 282–305 (DAPPDLAPDPGAWLTASDATHDSD) is disordered.

Belongs to the TtcA family. In terms of assembly, homodimer. The cofactor is Mg(2+). It depends on [4Fe-4S] cluster as a cofactor.

It localises to the cytoplasm. The catalysed reaction is cytidine(32) in tRNA + S-sulfanyl-L-cysteinyl-[cysteine desulfurase] + AH2 + ATP = 2-thiocytidine(32) in tRNA + L-cysteinyl-[cysteine desulfurase] + A + AMP + diphosphate + H(+). The protein operates within tRNA modification. Catalyzes the ATP-dependent 2-thiolation of cytidine in position 32 of tRNA, to form 2-thiocytidine (s(2)C32). The sulfur atoms are provided by the cysteine/cysteine desulfurase (IscS) system. The chain is tRNA-cytidine(32) 2-sulfurtransferase from Xanthomonas oryzae pv. oryzae (strain PXO99A).